A 677-amino-acid polypeptide reads, in one-letter code: Serine/threonine-protein kinase YPK2/YKR2 (677 aa).

A compositionally biased stretch (basic residues) spans Met-1 to Gly-12. The tract at residues Met-1–Gly-115 is disordered. Positions Lys-41 to His-56 are enriched in basic and acidic residues. 2 stretches are compositionally biased toward polar residues: residues Ile-61 to Ser-93 and Ser-101 to Gly-115. Thr-63 and Thr-66 each carry phosphothreonine. Ser-72 bears the Phosphoserine mark. In terms of domain architecture, Protein kinase spans Phe-344 to Phe-599. ATP is bound by residues Ile-350–Val-358 and Lys-373. Asp-467 acts as the Proton acceptor in catalysis. Thr-499 is subject to Phosphothreonine. At Thr-501 the chain carries Phosphothreonine; by PKH2. In terms of domain architecture, AGC-kinase C-terminal spans Lys-600–Pro-670. Position 641 is a phosphoserine; by TOR2 (Ser-641). Position 650 is a phosphoserine (Ser-650). At Thr-659 the chain carries Phosphothreonine; by TOR2. Ser-669 carries the post-translational modification Phosphoserine.

The protein belongs to the protein kinase superfamily. AGC Ser/Thr protein kinase family. RAC subfamily. Post-translationally, autophosphorylated. Phosphorylated by PKH2 and TOR2.

The protein localises to the cytoplasm. It catalyses the reaction L-seryl-[protein] + ATP = O-phospho-L-seryl-[protein] + ADP + H(+). It carries out the reaction L-threonyl-[protein] + ATP = O-phospho-L-threonyl-[protein] + ADP + H(+). Activated by phytosphingosine (PHS), a sphingoid long chain base. Activated by PKH2 phosphorylation. Kinase activity is regulated by TOR2 via direct phosphorylation of Ser-641 and Thr-659. Functionally, plays an essential role in the proliferation of yeast cells. Involved in a signaling pathway, required for optimal cell wall integrity, that acts in parallel with the PKC1-SLT2-dependent pathway. A substrate of TOR complex 2 (TORC2) and required for TORC2 to regulate spatial aspects of cell growth. Phosphorylation of residue Thr-501 is indispensable for function. May act as a downstream kinase in the sphingolipid-mediated signaling pathway. The protein is Serine/threonine-protein kinase YPK2/YKR2 (YPK2) of Saccharomyces cerevisiae (strain ATCC 204508 / S288c) (Baker's yeast).